Reading from the N-terminus, the 238-residue chain is Adapter protein MecA (238 aa).

The interval 108–133 (EDENEESVQGNQQQRRSHASDHSKRA) is disordered.

This sequence belongs to the MecA family. As to quaternary structure, homodimer.

Functionally, enables the recognition and targeting of unfolded and aggregated proteins to the ClpC protease or to other proteins involved in proteolysis. This chain is Adapter protein MecA, found in Staphylococcus carnosus (strain TM300).